The chain runs to 132 residues: Small integral membrane protein 33 (132 aa).

Residues 1–28 are disordered; that stretch reads MHQAGHYSWPSPAVNSSSEQEPQRQLPE. Asn15 carries an N-linked (GlcNAc...) asparagine glycan. Residues 43 to 63 traverse the membrane as a helical segment; it reads PVVTVIVAVFVLLAVCIIVAV. Positions 99-132 are disordered; sequence PQDSPEEAPPGPLVPGSCPAPDGPRPSIDEVTCL.

It is found in the membrane. The protein is Small integral membrane protein 33 of Homo sapiens (Human).